The following is a 162-amino-acid chain: Phosphopantetheine adenylyltransferase (162 aa).

Substrate is bound at residue Thr10. ATP is bound by residues 10–11 (TF) and His18. 3 residues coordinate substrate: Lys42, Leu74, and Arg88. ATP contacts are provided by residues 89–91 (GLR), Glu99, and 124–130 (YAFLSSS).

The protein belongs to the bacterial CoaD family. Homohexamer. Mg(2+) is required as a cofactor.

The protein resides in the cytoplasm. It carries out the reaction (R)-4'-phosphopantetheine + ATP + H(+) = 3'-dephospho-CoA + diphosphate. It participates in cofactor biosynthesis; coenzyme A biosynthesis; CoA from (R)-pantothenate: step 4/5. Functionally, reversibly transfers an adenylyl group from ATP to 4'-phosphopantetheine, yielding dephospho-CoA (dPCoA) and pyrophosphate. The polypeptide is Phosphopantetheine adenylyltransferase (Methylococcus capsulatus (strain ATCC 33009 / NCIMB 11132 / Bath)).